The sequence spans 318 residues: NADH-ubiquinone oxidoreductase chain 1 (318 aa).

A run of 8 helical transmembrane segments spans residues 3-23, 70-90, 100-120, 146-166, 171-191, 231-251, 254-273, and 294-314; these read FINILTLLIPILIAMAFLTLV, LFIIAPTLSLTLALSLWIPLP, LGMLFILATSSLSVYSILWSG, MAIILLSVLLMSGSFSLQMLI, HIWLLIPAWPMAMMWYISTLA, IILMNALTSIVFLGPLYHINY, LYSTSFMTETLLLSTTFLWI, and LPLTLAFCMWYISLPIFLAGI.

It belongs to the complex I subunit 1 family. In terms of assembly, core subunit of respiratory chain NADH dehydrogenase (Complex I) which is composed of 45 different subunits.

Its subcellular location is the mitochondrion inner membrane. It catalyses the reaction a ubiquinone + NADH + 5 H(+)(in) = a ubiquinol + NAD(+) + 4 H(+)(out). Core subunit of the mitochondrial membrane respiratory chain NADH dehydrogenase (Complex I) which catalyzes electron transfer from NADH through the respiratory chain, using ubiquinone as an electron acceptor. Essential for the catalytic activity and assembly of complex I. This Rattus norvegicus (Rat) protein is NADH-ubiquinone oxidoreductase chain 1.